The sequence spans 230 residues: Broad specificity amino-acid racemase YgeA (230 aa).

Residues methionine 10, glutamine 52, and 83–85 each bind substrate; that span reads TNT. The active-site Proton donor is threonine 83. Cysteine 197 (proton acceptor) is an active-site residue. 198–199 contacts substrate; sequence TE.

The protein belongs to the aspartate/glutamate racemases family.

The catalysed reaction is an L-alpha-amino acid = a D-alpha-amino acid. The enzyme catalyses L-homoserine = D-homoserine. Amino-acid racemase able to utilize a broad range of substrates. Highest activity is observed with L-homoserine and D-homoserine. Has tenfold lower activity against L-methionine, L-leucine, L-valine and L-histidine. Has low activity with L-norvaline, L-asparagine, D-methionine, L-aminobutyric acid, L-isoleucine, L-serine, L-norleucine, L-alanine, L-glutamine, LL-diaminopimelic acid and L-phenylalanine. Has no activity against ten L-amino acids (Thr, Glu, Asp, Arg, Lys, Tyr, Trp, Orn, Cit and Aad). D-amino acids might be used as components of peptidoglycan and/or be involved in peptidoglycan metabolism and remodeling. In Escherichia coli (strain K12), this protein is Broad specificity amino-acid racemase YgeA (ygeA).